The sequence spans 98 residues: MPEITRDQVEHLARLAHIRMTDEELDTMSGDLEKILEHVSAVQAAAGDDVTPTSHPIALENVFREDVPAGMLTQEEALDQAPDSEDGQFKVPAILDGE.

It belongs to the GatC family. As to quaternary structure, heterotrimer of A, B and C subunits.

The enzyme catalyses L-glutamyl-tRNA(Gln) + L-glutamine + ATP + H2O = L-glutaminyl-tRNA(Gln) + L-glutamate + ADP + phosphate + H(+). It carries out the reaction L-aspartyl-tRNA(Asn) + L-glutamine + ATP + H2O = L-asparaginyl-tRNA(Asn) + L-glutamate + ADP + phosphate + 2 H(+). In terms of biological role, allows the formation of correctly charged Asn-tRNA(Asn) or Gln-tRNA(Gln) through the transamidation of misacylated Asp-tRNA(Asn) or Glu-tRNA(Gln) in organisms which lack either or both of asparaginyl-tRNA or glutaminyl-tRNA synthetases. The reaction takes place in the presence of glutamine and ATP through an activated phospho-Asp-tRNA(Asn) or phospho-Glu-tRNA(Gln). The chain is Aspartyl/glutamyl-tRNA(Asn/Gln) amidotransferase subunit C from Micrococcus luteus (strain ATCC 4698 / DSM 20030 / JCM 1464 / CCM 169 / CCUG 5858 / IAM 1056 / NBRC 3333 / NCIMB 9278 / NCTC 2665 / VKM Ac-2230) (Micrococcus lysodeikticus).